The following is a 482-amino-acid chain: Cysteine--tRNA ligase (482 aa).

Cysteine 29 contacts Zn(2+). The 'HIGH' region motif lies at 31–41 (VTVYDYCHLGH). Residues cysteine 213, histidine 238, and glutamate 242 each contribute to the Zn(2+) site. Residues 275–279 (KMSKS) carry the 'KMSKS' region motif. Lysine 278 is an ATP binding site.

The protein belongs to the class-I aminoacyl-tRNA synthetase family. In terms of assembly, monomer. It depends on Zn(2+) as a cofactor.

The protein localises to the cytoplasm. It catalyses the reaction tRNA(Cys) + L-cysteine + ATP = L-cysteinyl-tRNA(Cys) + AMP + diphosphate. This is Cysteine--tRNA ligase from Gloeobacter violaceus (strain ATCC 29082 / PCC 7421).